The primary structure comprises 359 residues: uncharacterized protein (359 aa).

One can recognise a Protein kinase domain in the interval 43-309; the sequence is YHLIRKLGSG…VLDFLGDDWG (267 aa). ATP-binding positions include 49–57 and Lys72; that span reads LGSGSYGRV. Asp163 (proton acceptor) is an active-site residue. Residues 314-359 form a disordered region; it reads REGPGVLGSAVSYEDREEGGSSLEEWTDEGDDSKSGGRTGTDGGAP. Gly residues predominate over residues 350–359; the sequence is GRTGTDGGAP.

Belongs to the protein kinase superfamily. Ser/Thr protein kinase family. STKL subfamily.

It carries out the reaction L-seryl-[protein] + ATP = O-phospho-L-seryl-[protein] + ADP + H(+). The catalysed reaction is L-threonyl-[protein] + ATP = O-phospho-L-threonyl-[protein] + ADP + H(+). This is an uncharacterized protein from Homo sapiens (Human).